A 227-amino-acid polypeptide reads, in one-letter code: 2,3-bisphosphoglycerate-dependent phosphoglycerate mutase (227 aa).

Residues 7–14 (RHGQSEWN), 20–21 (TG), Arg59, 86–89 (ERHY), Lys97, 113–114 (RR), and 182–183 (GN) contribute to the substrate site. His8 (tele-phosphohistidine intermediate) is an active-site residue. The active-site Proton donor/acceptor is Glu86.

This sequence belongs to the phosphoglycerate mutase family. BPG-dependent PGAM subfamily. In terms of assembly, homodimer.

It catalyses the reaction (2R)-2-phosphoglycerate = (2R)-3-phosphoglycerate. Its pathway is carbohydrate degradation; glycolysis; pyruvate from D-glyceraldehyde 3-phosphate: step 3/5. Functionally, catalyzes the interconversion of 2-phosphoglycerate and 3-phosphoglycerate. The chain is 2,3-bisphosphoglycerate-dependent phosphoglycerate mutase from Neisseria gonorrhoeae (strain ATCC 700825 / FA 1090).